A 981-amino-acid polypeptide reads, in one-letter code: Echinoderm microtubule-associated protein-like 4 (981 aa).

Residue Met1 is modified to N-acetylmethionine. Disordered regions lie at residues 1-20 (MDGFAGSLDDSISAASTSDV) and 57-205 (DHVA…PKLI). Residues 1-249 (MDGFAGSLDD…IPSDVDNYDD (249 aa)) form a microtubule-binding region. 4 positions are modified to phosphoserine: Ser7, Ser13, Ser16, and Ser61. Residues 14–63 (AASTSDVQDRLSALESRVQQQEDEITVLKAALADVLRRLAISEDHVASVK) are a coiled coil. At Thr96 the chain carries Phosphothreonine. The segment covering 114–134 (GTEKKKEKPQGQREKKEESHS) has biased composition (basic and acidic residues). At Ser134 the chain carries Phosphoserine; by NEK7. A compositionally biased stretch (low complexity) spans 137-155 (QSPQIRASPSPQPSSQPLQ). Ser144 is subject to Phosphoserine; by NEK6. Ser146 is modified (phosphoserine; by NEK7). The residue at position 171 (Ser171) is a Phosphoserine. The segment covering 176 to 193 (SPAEKSHNSWENSDDSRN) has biased composition (basic and acidic residues). Ser200 bears the Phosphoserine mark. Thr201 carries the phosphothreonine modification. Tyr226 is subject to Phosphotyrosine. Thr237 carries the phosphothreonine modification. 5 WD repeats span residues 259–297 (LKLEWAYGYRGKDCRANVYLLPTGKIVYFIASVVVLFNY), 301–348 (TQRH…VWDS), 356–396 (IIGL…VWDW), 403–438 (AEIKTTNEVVLAVEFHPTDANTIITCGKSHIFFWTW), and 445–484 (RKQGIFGKYEKPKFVQCLAFLGNGDVLTGDSGGVMLIWSK). Thr490 is modified (phosphothreonine; by NEK6). WD repeat units follow at residues 500–538 (QISKQIKAHDGSVFTLCQMRNGMLLTGGGKDRKIILWDH), 543–579 (EREIEVPDQYGTIRAVAEGKADQFLVGTSRNFILRGT), 582–621 (DGFQIEVQGHTDELWGLATHPFKDLLLTCAQDRQVCLWNS), 625–662 (RLEWTRLVDEPGHCADFHPSGTVVAIGTHSGRWFVLDA), 668–704 (VSIHTDGNEQLSVMRYSIDGTFLAVGSHDNFIYLYVV), 711–750 (YSRYGRCTGHSSYITHLDWSPDNKYIMSNSGDYEILYWDI), 760–818 (RSDC…LFQY), and 825–864 (APSHKYSAHSSHVTNVSFTHNDSHLISTGGKDMSIIQWKL). Thr609 carries the phosphothreonine; by NEK6 and NEK7 modification. Residues 881–893 (LTKAPVSSTESVI) are compositionally biased toward polar residues. The tract at residues 881 to 981 (LTKAPVSSTE…EDQQDPSPSS (101 aa)) is disordered. Phosphoserine is present on residues Ser891 and Ser895. Thr897 and Thr899 each carry phosphothreonine. Phosphoserine is present on Ser903. Residues 916–931 (ISSSPTLLENSLEQTV) show a composition bias toward polar residues. Positions 937–946 (HSEEESEEGS) are enriched in acidic residues. Residue Ser978 is modified to Phosphoserine. Position 981 is a phosphoserine; by NEK6 and NEK7 (Ser981).

It belongs to the WD repeat EMAP family. In terms of assembly, homotrimer; self-association is mediated by the N-terminal coiled coil. Interacts (via WD repeats) with NUDC. Interacts with alpha- and beta-tubulin during mitosis. Post-translationally, phosphorylated during mitosis. Phosphorylation at Ser-144 and Ser-146 promotes its dissociation from microtubules during mitosis which is required for efficient chromosome congression.

The protein localises to the cytoplasm. The protein resides in the cytoskeleton. Its subcellular location is the spindle. It localises to the microtubule organizing center. It is found in the midbody. In terms of biological role, essential for the formation and stability of microtubules (MTs). Required for the organization of the mitotic spindle and for the proper attachment of kinetochores to MTs. Promotes the recruitment of NUDC to the mitotic spindle for mitotic progression. The protein is Echinoderm microtubule-associated protein-like 4 (EML4) of Homo sapiens (Human).